A 321-amino-acid polypeptide reads, in one-letter code: Glycerol-3-phosphate phosphatase (321 aa).

The Nucleophile role is filled by Asp34. 3 residues coordinate Mg(2+): Asp34, Asp36, and Asp260. The active-site Proton donor is Asp36.

This sequence belongs to the HAD-like hydrolase superfamily. CbbY/CbbZ/Gph/YieH family. As to quaternary structure, homodimer. Requires Mg(2+) as cofactor. Expression was confirmed in liver, adipose tissue, testis and pancreatic islet.

It carries out the reaction O-phospho-L-tyrosyl-[protein] + H2O = L-tyrosyl-[protein] + phosphate. The catalysed reaction is sn-glycerol 1-phosphate + H2O = glycerol + phosphate. The enzyme catalyses sn-glycerol 3-phosphate + H2O = glycerol + phosphate. Functionally, glycerol-3-phosphate phosphatase hydrolyzing glycerol-3-phosphate into glycerol. Thereby, regulates the cellular levels of glycerol-3-phosphate a metabolic intermediate of glucose, lipid and energy metabolism. Was also shown to have a 2-phosphoglycolate phosphatase activity and a tyrosine-protein phosphatase activity. However, their physiological relevance is unclear. In vitro, also has a phosphatase activity toward ADP, ATP, GDP and GTP. In Rattus norvegicus (Rat), this protein is Glycerol-3-phosphate phosphatase.